A 120-amino-acid chain; its full sequence is UPF0231 protein YacL (120 aa).

Belongs to the UPF0231 family.

The polypeptide is UPF0231 protein YacL (Escherichia coli O139:H28 (strain E24377A / ETEC)).